The sequence spans 272 residues: Glutamate 5-kinase (272 aa).

Residue Lys-15 coordinates ATP. 3 residues coordinate substrate: Ser-55, Asp-142, and Asn-158. Residues 178–179 (SD) and 220–226 (TGGMLSK) each bind ATP.

It belongs to the glutamate 5-kinase family.

It localises to the cytoplasm. It catalyses the reaction L-glutamate + ATP = L-glutamyl 5-phosphate + ADP. The protein operates within amino-acid biosynthesis; L-proline biosynthesis; L-glutamate 5-semialdehyde from L-glutamate: step 1/2. Functionally, catalyzes the transfer of a phosphate group to glutamate to form L-glutamate 5-phosphate. This chain is Glutamate 5-kinase, found in Streptococcus equi subsp. zooepidemicus (strain H70).